The following is a 155-amino-acid chain: Ribosomal RNA large subunit methyltransferase H (155 aa).

S-adenosyl-L-methionine-binding positions include leucine 72, glycine 103, and 122–127 (LSPLTL).

Belongs to the RNA methyltransferase RlmH family. Homodimer.

The protein resides in the cytoplasm. The catalysed reaction is pseudouridine(1915) in 23S rRNA + S-adenosyl-L-methionine = N(3)-methylpseudouridine(1915) in 23S rRNA + S-adenosyl-L-homocysteine + H(+). In terms of biological role, specifically methylates the pseudouridine at position 1915 (m3Psi1915) in 23S rRNA. This is Ribosomal RNA large subunit methyltransferase H from Haemophilus ducreyi (strain 35000HP / ATCC 700724).